Consider the following 373-residue polypeptide: Chorismate synthase (373 aa).

Residue Arg46 participates in NADP(+) binding. FMN contacts are provided by residues 123–125, 251–252, Gly295, 310–314, and Arg337; these read RSS, NA, and KPTPS.

Belongs to the chorismate synthase family. Requires FMNH2 as cofactor.

It carries out the reaction 5-O-(1-carboxyvinyl)-3-phosphoshikimate = chorismate + phosphate. The protein operates within metabolic intermediate biosynthesis; chorismate biosynthesis; chorismate from D-erythrose 4-phosphate and phosphoenolpyruvate: step 7/7. In terms of biological role, catalyzes the anti-1,4-elimination of the C-3 phosphate and the C-6 proR hydrogen from 5-enolpyruvylshikimate-3-phosphate (EPSP) to yield chorismate, which is the branch point compound that serves as the starting substrate for the three terminal pathways of aromatic amino acid biosynthesis. This reaction introduces a second double bond into the aromatic ring system. The chain is Chorismate synthase from Methanococcus maripaludis (strain C5 / ATCC BAA-1333).